A 605-amino-acid chain; its full sequence is Pescadillo homolog (605 aa).

Residues 346–440 enclose the BRCT domain; that stretch reads PVATLFSEFV…ELVPANLYLP (95 aa). The interval 449-553 is disordered; the sequence is SPWGDSTGYD…RKATEEEEEK (105 aa). Over residues 461–508 the composition is skewed to acidic residues; that stretch reads AENDEDVEGSDAEEIDESADEDAESEEVEEDDTAAVALNEDDEDDEDE. Over residues 526 to 537 the composition is skewed to basic and acidic residues; that stretch reads EAKDVIDSESSD. The stretch at 533–605 forms a coiled coil; it reads SESSDKKKKK…KAKLAKLDKK (73 aa).

The protein belongs to the pescadillo family. In terms of assembly, component of the NOP7 complex, composed of ERB1, NOP7 and YTM1. The complex is held together by ERB1, which interacts with NOP7 via its N-terminal domain and with YTM1 via a high-affinity interaction between the seven-bladed beta-propeller domains of the 2 proteins. The NOP7 complex associates with the 66S pre-ribosome.

It is found in the nucleus. The protein resides in the nucleolus. The protein localises to the nucleoplasm. Its function is as follows. Component of the NOP7 complex, which is required for maturation of the 25S and 5.8S ribosomal RNAs and formation of the 60S ribosome. The protein is Pescadillo homolog of Kluyveromyces lactis (strain ATCC 8585 / CBS 2359 / DSM 70799 / NBRC 1267 / NRRL Y-1140 / WM37) (Yeast).